Reading from the N-terminus, the 88-residue chain is Cell division topological specificity factor (88 aa).

The protein belongs to the MinE family.

Its function is as follows. Prevents the cell division inhibition by proteins MinC and MinD at internal division sites while permitting inhibition at polar sites. This ensures cell division at the proper site by restricting the formation of a division septum at the midpoint of the long axis of the cell. The polypeptide is Cell division topological specificity factor (Citrobacter koseri (strain ATCC BAA-895 / CDC 4225-83 / SGSC4696)).